A 414-amino-acid polypeptide reads, in one-letter code: Transforming growth factor beta-2 proprotein (414 aa).

The first 20 residues, 1–20 (MHYCVLSAFLLLHLVTAALS), serve as a signal peptide directing secretion. Asn72, Asn140, and Asn241 each carry an N-linked (GlcNAc...) asparagine glycan. 4 disulfides stabilise this stretch: Cys309/Cys318, Cys317/Cys380, Cys346/Cys411, and Cys350/Cys413.

The protein belongs to the TGF-beta family. As to quaternary structure, interacts with the serine proteases, HTRA1 and HTRA3. Interacts with ASPN. Interacts with MFAP5. In terms of assembly, interacts with Transforming growth factor beta-2 (TGF-beta-2) chain; interaction is non-covalent and maintains (TGF-beta-2) in a latent state. Interacts with LRRC32/GARP; leading to regulate activation of TGF-beta-2. Interacts with NREP; the interaction results in a decrease in TGFB2 autoinduction. Transforming growth factor beta-2: Homodimer; disulfide-linked. Transforming growth factor beta-2: Interacts with TGF-beta receptors (TGFBR1 and TGFBR2), leading to signal transduction. In terms of processing, the precursor proprotein is cleaved in the Golgi apparatus to form Transforming growth factor beta-2 (TGF-beta-2) and Latency-associated peptide (LAP) chains, which remain non-covalently linked, rendering TGF-beta-2 inactive.

It is found in the secreted. Its subcellular location is the extracellular space. It localises to the extracellular matrix. Its function is as follows. Precursor of the Latency-associated peptide (LAP) and Transforming growth factor beta-2 (TGF-beta-2) chains, which constitute the regulatory and active subunit of TGF-beta-2, respectively. In terms of biological role, required to maintain the Transforming growth factor beta-2 (TGF-beta-2) chain in a latent state during storage in extracellular matrix. Associates non-covalently with TGF-beta-2 and regulates its activation via interaction with 'milieu molecules', such as LTBP1 and LRRC32/GARP, that control activation of TGF-beta-2. Functionally, multifunctional protein that regulates various processes such as angiogenesis and heart development. Activation into mature form follows different steps: following cleavage of the proprotein in the Golgi apparatus, Latency-associated peptide (LAP) and Transforming growth factor beta-2 (TGF-beta-2) chains remain non-covalently linked rendering TGF-beta-2 inactive during storage in extracellular matrix. At the same time, LAP chain interacts with 'milieu molecules', such as LTBP1 and LRRC32/GARP, that control activation of TGF-beta-2 and maintain it in a latent state during storage in extracellular milieus. Once activated following release of LAP, TGF-beta-2 acts by binding to TGF-beta receptors (TGFBR1 and TGFBR2), which transduce signal. In Mustela putorius furo (European domestic ferret), this protein is Transforming growth factor beta-2 proprotein (TGFB2).